Here is a 425-residue protein sequence, read N- to C-terminus: Putative nucleoside transporter YegT (425 aa).

At 1–8 (MKTTAKLS) the chain is on the periplasmic side. Residues 9–29 (FMMFVEWFIWGAWFVPLWLWL) traverse the membrane as a helical segment. Over 30–38 (SKSGFSAGE) the chain is Cytoplasmic. Residues 39–59 (IGWSYACTAIAAILSPILVGS) traverse the membrane as a helical segment. Over 60 to 63 (ITDR) the chain is Periplasmic. The helical transmembrane segment at 64–84 (FFSAQKVLAVLMFAGALLMYF) threads the bilayer. The Cytoplasmic segment spans residues 85–90 (AAQQTT). The helical transmembrane segment at 91–111 (FAGFFPLLLAYSLTYMPTIAL) threads the bilayer. Residues 112 to 131 (TNSIAFANVPDVERDFPRIR) are Periplasmic-facing. Residues 132–152 (VMGTIGWIASGLACGFLPQIL) traverse the membrane as a helical segment. The Cytoplasmic segment spans residues 153 to 161 (GYADISPTN). The chain crosses the membrane as a helical span at residues 162 to 182 (IPLLITAGSSALLGVFAFFLP). At 183-210 (DTPPKSTGKMDIKVMLGLDALILLRDKN) the chain is on the periplasmic side. A helical membrane pass occupies residues 211–231 (FLVFFFCSFLFAMPLAFYYIF). The Cytoplasmic segment spans residues 232–244 (ANGYLTEVGMKNA). The helical transmembrane segment at 245 to 265 (TGWMTLGQFSEIFFMLALPFF) threads the bilayer. Residues 266 to 287 (TKRFGIKKVLLLGLVTAAIRYG) are Periplasmic-facing. The helical transmembrane segment at 288–308 (FFIYGSADEYFTYALLFLGIL) threads the bilayer. The Cytoplasmic segment spans residues 309–339 (LHGVSYDFYYVTAYIYVDKKAPVHMRTAAQG). The helical transmembrane segment at 340 to 360 (LITLCCQGFGSLLGYRLGGVM) threads the bilayer. At 361 to 379 (MEKMFAYQEPVNGLTFNWS) the chain is on the periplasmic side. The helical transmembrane segment at 380 to 400 (GMWTFGAVMIAIIAVLFMIFF) threads the bilayer. The Cytoplasmic portion of the chain corresponds to 401–425 (RESDNEITAIKVDDRDIALTQGEVK).

It belongs to the major facilitator superfamily. Nucleoside:H(+) symporter (NHS) (TC 2.A.1.10) family.

The protein localises to the cell inner membrane. Functionally, could be involved in nucleoside transport. This is Putative nucleoside transporter YegT (yegT) from Escherichia coli (strain K12).